The sequence spans 216 residues: Uracil phosphoribosyltransferase (216 aa).

CTP is bound by residues 29–30 (RK) and arginine 37. GTP is bound at residue 30 to 34 (KNLVR). 5-phospho-alpha-D-ribose 1-diphosphate is bound at residue arginine 80. Position 87 to 96 (87 to 96 (EGLLKAFPKA)) interacts with CTP. Residues arginine 105 and 140-148 (DPMIATAST) each bind 5-phospho-alpha-D-ribose 1-diphosphate. Residues isoleucine 203 and 208–210 (GDA) contribute to the uracil site. Residue aspartate 209 participates in 5-phospho-alpha-D-ribose 1-diphosphate binding.

It belongs to the UPRTase family. As to quaternary structure, homotetramer. Mg(2+) is required as a cofactor.

It catalyses the reaction UMP + diphosphate = 5-phospho-alpha-D-ribose 1-diphosphate + uracil. Its pathway is pyrimidine metabolism; UMP biosynthesis via salvage pathway; UMP from uracil: step 1/1. With respect to regulation, allosterically activated by GTP. Inhibited by CTP and UMP in combination. Its function is as follows. Catalyzes the conversion of uracil and 5-phospho-alpha-D-ribose 1-diphosphate (PRPP) to UMP and diphosphate. The chain is Uracil phosphoribosyltransferase (upp) from Saccharolobus solfataricus (strain ATCC 35092 / DSM 1617 / JCM 11322 / P2) (Sulfolobus solfataricus).